We begin with the raw amino-acid sequence, 328 residues long: Tetraacyldisaccharide 4'-kinase (328 aa).

T55–T62 provides a ligand contact to ATP.

Belongs to the LpxK family.

It catalyses the reaction a lipid A disaccharide + ATP = a lipid IVA + ADP + H(+). It functions in the pathway glycolipid biosynthesis; lipid IV(A) biosynthesis; lipid IV(A) from (3R)-3-hydroxytetradecanoyl-[acyl-carrier-protein] and UDP-N-acetyl-alpha-D-glucosamine: step 6/6. Transfers the gamma-phosphate of ATP to the 4'-position of a tetraacyldisaccharide 1-phosphate intermediate (termed DS-1-P) to form tetraacyldisaccharide 1,4'-bis-phosphate (lipid IVA). This is Tetraacyldisaccharide 4'-kinase from Shigella boydii serotype 4 (strain Sb227).